The sequence spans 985 residues: Regulator of telomere elongation helicase 1 homolog (985 aa).

The Helicase ATP-binding domain maps to 7 to 303 (AGIPVHFPFE…QDMAGDEPKD (297 aa)). An ATP-binding site is contributed by 42–49 (SPTGTGKT). Residues Cys-146, Cys-164, Cys-173, and Cys-209 each coordinate [4Fe-4S] cluster. The DEAH box motif lies at 252–255 (DEAH). Phosphothreonine is present on Thr-874.

This sequence belongs to the helicase family. RAD3/XPD subfamily.

The protein resides in the nucleus. The catalysed reaction is ATP + H2O = ADP + phosphate + H(+). In terms of biological role, a probable ATP-dependent DNA helicase implicated in DNA repair and the maintenance of genomic stability. Acts as an anti-recombinase to counteract toxic recombination and limit crossover during meiosis. Regulates meiotic recombination and crossover homeostasis by physically dissociating strand invasion events and thereby promotes noncrossover repair by meiotic synthesis dependent strand annealing (SDSA) as well as disassembly of D loop recombination intermediates. The polypeptide is Regulator of telomere elongation helicase 1 homolog (Drosophila erecta (Fruit fly)).